The chain runs to 1614 residues: Protein scribble homolog (1614 aa).

The tract at residues 1–809 (MLKCIPLWRC…MRLWRERMVE (809 aa)) is sufficient for targeting to adherens junction and to inhibit cell proliferation. LRR repeat units follow at residues 11–34 (NRHV…IYRY), 35–58 (SRSL…FFRL), 59–81 (LNLR…VANF), 83–105 (QLVE…KFCK), 107–127 (LEIA…FTQL), 128–150 (RSLA…VGNL), 151–173 (ANLV…LSFL), 174–196 (VKLE…LGAL), 197–219 (PNLR…LGNL), 221–242 (RLVC…LGGL), 243–265 (LLLT…IGQL), 267–288 (QLSI…IGDC), 289–311 (ENLS…LGKL), 312–334 (TKLT…IGGC), 336–357 (ALSV…LAHT), 359–380 (ELHV…LTHL), and 382–405 (LKAL…DDAQ). Position 37 is a phosphoserine (Ser37). Thr378 carries the phosphothreonine modification. Disordered regions lie at residues 417-441 (PQQP…SDAP), 462-608 (GAAA…RLIR), and 636-692 (AQPD…VVSA). Over residues 428–437 (GLQSSPSESW) the composition is skewed to polar residues. Phosphothreonine is present on Thr475. The span at 479 to 494 (SELKVMKRGVEERRGE) shows a compositional bias: basic and acidic residues. A compositionally biased stretch (polar residues) spans 516-533 (TESGLSEDSQPSTGTASQ). Positions 548–557 (QQEAAPNAQE) are enriched in low complexity. Positions 662 to 686 (EEEDEEDEEEDEEEEEVAVAEEDKE) are enriched in acidic residues. Residues 664–691 (EDEEDEEEDEEEEEVAVAEEDKEEAVVS) are a coiled coil. A phosphoserine mark is found at Ser699 and Ser755. The segment at 708 to 1219 (IEPARIEEEE…SLESVSSIDR (512 aa)) is interaction with ARHGEF7. In terms of domain architecture, PDZ 1 spans 719-806 (TLTIVRQTGG…TVQMRLWRER (88 aa)). The segment at 719–1184 (TLTIVRQTGG…TVLVCDGFDT (466 aa)) is required for interaction with VIM. Residue Thr817 is modified to Phosphothreonine. Phosphoserine is present on residues Ser826, Ser866, and Ser930. The 89-residue stretch at 853–941 (VACLVRSEKG…TIALLLEREA (89 aa)) folds into the PDZ 2 domain. The tract at residues 940-971 (EAGGPLPPSPLPHSPPPPVTAPSTVVTASPGE) is disordered. Residues 944–959 (PLPPSPLPHSPPPPVT) show a composition bias toward pro residues. Positions 960-969 (APSTVVTASP) are enriched in low complexity. PDZ domains lie at 994 to 1083 (EICL…RRDP) and 1090 to 1178 (ELCI…TVLV). 8 positions are modified to phosphoserine: Ser1130, Ser1210, Ser1213, Ser1216, Ser1222, Ser1260, Ser1268, and Ser1271. The segment at 1214–1448 (VSSIDRELSP…LPDRALSPAE (235 aa)) is disordered. Positions 1217–1232 (IDRELSPEGCGKEKEP) are enriched in basic and acidic residues. Thr1304 is modified (phosphothreonine). Ser1310 carries the post-translational modification Phosphoserine. Residues 1315–1327 (SFRERQKYFELEV) are compositionally biased toward basic and acidic residues. Ser1340 carries the phosphoserine modification. Residues 1341–1368 (LVGADDLRKMQEEEARKLQQKRAQLMRE) are a coiled coil. Positions 1345-1357 (DDLRKMQEEEARK) are enriched in basic and acidic residues. Acidic residues predominate over residues 1378–1390 (LDGEAPDDEEPEE). Over residues 1396–1408 (GPAAGLSPSSPQP) the composition is skewed to low complexity. Phosphoserine occurs at positions 1402 and 1405. The segment covering 1418–1429 (AKAERRHQERLR) has biased composition (basic and acidic residues). A phosphoserine mark is found at Ser1432, Ser1445, and Ser1467. The segment at 1476-1524 (QMVLSKSQEGRSRRGPLERLAEAPSPAPTPSPTPVEDLGLQTSTSPGRL) is disordered. Positions 1483–1496 (QEGRSRRGPLERLA) are enriched in basic and acidic residues. Ser1500 is subject to Phosphoserine. Residue Thr1504 is modified to Phosphothreonine. Phosphoserine is present on residues Ser1506, Ser1520, and Ser1550. The segment at 1581 to 1614 (GRPSPGTVGPEEVTLCSSRRPVRPGRRGLGPVPS) is disordered.

Belongs to the LAP (LRR and PDZ) protein family. As to quaternary structure, interacts with UBE3A. Interacts with PAK1 and PAK2. Interacts (via PDZ domains) with VANGL2. Interacts (via PDZ domains) with LPP and TRIP6; the interaction is direct. Interacts (via PDZ domains) with TJP2. Interacts (via PDZ domains) with APC; may mediate APC targeting to adherens junctions of epithelial cells. Interacts (via PDZ domains) with TSHR; regulates TSHR trafficking and function. Interacts with ARHGEF7 and GIT1; interacts directly with ARHGEF7. Interacts with CTNNB1. Interacts with MAPK12. Interacts (via PDZ domains 1 and 3) with MCC. Interacts with DLG5. Interacts with STK4/MST1 and LATS1 in the presence of DLG5. Interacts (via PDZ domain 3) with CRTAM (via PDZ-binding motif); the interaction promotes CRTAM and SCRIB polarization in a subset of CD4+ T-cells. Interacts with YES1, when YES1 is in a closed conformation; the interaction facilitates YES1 autophosphorylation. Interacts (via PDZ domains) with VIM; the interaction protects SCRIB from proteasomal degradation and facilitates SCRIB localization to intermediate filaments, the interaction is reduced by cell contact inhibition. Post-translationally, ubiquitinated; targeted for UBE3A-dependent multiubiquitination and degraded. Palmitoylated. Could be depalmitoylated by LYPLA1 and/or LYPLA2. Palmitoylation of SCRIB by ZDHHC7 is required for its localization to cell-cell junctions, function in the establishement of epithelial cell polarity and the regulation of downstream signaling pathways important for epithelial cell differentiation.

It localises to the cell membrane. The protein localises to the cell junction. Its subcellular location is the adherens junction. It is found in the cell projection. The protein resides in the lamellipodium. It localises to the cytoplasm. The protein localises to the postsynapse. Its subcellular location is the presynapse. Scaffold protein involved in different aspects of polarized cell differentiation regulating epithelial and neuronal morphogenesis and T-cell polarization. Via its interaction with CRTAM, required for the late phase polarization of a subset of CD4+ T-cells, which in turn regulates TCR-mediated proliferation and IFNG and IL22 production. Plays a role in cell directional movement, cell orientation, cell sheet organization and Golgi complex polarization at the cell migration front. Promotes epithelial cell layer barrier function via maintaining cell-cell adhesion. Most probably functions in the establishment of apico-basal cell polarity. May function in cell proliferation regulating progression from G1 to S phase and as a positive regulator of apoptosis for instance during acinar morphogenesis of the mammary epithelium. May regulate cell invasion via MAPK-mediated cell migration and adhesion. May play a role in exocytosis and in the targeting of synaptic vesicles to synapses. Functions as an activator of Rac GTPase activity. The polypeptide is Protein scribble homolog (Canis lupus familiaris (Dog)).